The sequence spans 86 residues: Probable acyl carrier protein CCNA_01221 (86 aa).

The region spanning 6–83 (TVTDLSLREI…DLSKLINDLR (78 aa)) is the Carrier domain. At S43 the chain carries O-(pantetheine 4'-phosphoryl)serine.

The protein belongs to the acyl carrier protein (ACP) family.

The protein operates within lipid metabolism; sphingolipid metabolism. Functionally, involved in de novo bacterial ceramide synthesis. The protein is Probable acyl carrier protein CCNA_01221 of Caulobacter vibrioides (strain NA1000 / CB15N) (Caulobacter crescentus).